Reading from the N-terminus, the 1043-residue chain is Protein SLOW WALKER 2 (1043 aa).

Disordered stretches follow at residues 32-113, 444-469, 632-737, and 861-1043; these read SALP…SIDD, QGAD…VSTD, DIEH…GGYD, and SKKK…KASE. Positions 44-51 match the Nuclear localization signal 1 motif; the sequence is FRKPAKSK. Over residues 47-59 the composition is skewed to basic residues; it reads PAKSKTQKRKKPK. Composition is skewed to basic and acidic residues over residues 80–95 and 444–466; these read EKGK…KDAP and QGAD…KQEV. The Nuclear localization signal 2 motif lies at 441-448; it reads NRKQGADD. A compositionally biased stretch (acidic residues) spans 632–645; the sequence is DIEHFEDVIEGDDV. Residues 646–673 are compositionally biased toward basic and acidic residues; sequence DPNKKAENDENVVEVDHDGVEKSSRDGD. Acidic residues-rich tracts occupy residues 688–699 and 872–983; these read DEEDDNASDDSE and EEAA…DSDG. Residues 988-1000 show a composition bias toward basic residues; that stretch reads SKKKKKEKRKRKS. Positions 1006–1031 are enriched in basic and acidic residues; it reads EEYKHLIDQDEKEDSKTKRKATSEPT. A Nuclear localization signal 3 motif is present at residues 1022 to 1029; it reads TKRKATSE. The segment covering 1032–1043 has biased composition (basic residues); the sequence is KKKKKKKSKASE.

This sequence belongs to the CBF/MAK21 family. In terms of assembly, interacts with RBL in both the nucleolus and nucleoplasm. Binds to NOC2. In terms of tissue distribution, mainly expressed in actively dividing tissues (e.g. root tips, lateral root primordia, shoot apices, young leaves, inflorescences and pollen grains) through the plant, including roots, stems, leaves, inflorescences, siliques and seedlings, and in gametophytes.

Its subcellular location is the nucleus. It localises to the nucleolus. Its function is as follows. Together with NOC2, probably involved in pre-ribosome export from the nucleus to the cytoplasm. Required for coordinated cell cycle progression during female gametophyte and pollen development. This chain is Protein SLOW WALKER 2, found in Arabidopsis thaliana (Mouse-ear cress).